The following is a 178-amino-acid chain: MSRIGNKVIVLPAGVELANNDNVVTVKGPKGELTREFSKDIEIRVEGTEVTLHRPNDSKEMKTIHGTTRALLNNMVVGVSEGFKKELEMRGVGYRAQLQGSKLVLAVGKSHPDEVEAPEGITFELPNPTTIVVSGISKEVVGQTAAYVRSLRSPEPYKGKGIRYIGEFVRRKEGKTGK.

The protein belongs to the universal ribosomal protein uL6 family. In terms of assembly, part of the 50S ribosomal subunit.

This protein binds to the 23S rRNA, and is important in its secondary structure. It is located near the subunit interface in the base of the L7/L12 stalk, and near the tRNA binding site of the peptidyltransferase center. This is Large ribosomal subunit protein uL6 from Streptococcus pneumoniae (strain 70585).